Consider the following 367-residue polypeptide: UDP-N-acetylglucosamine--N-acetylmuramyl-(pentapeptide) pyrophosphoryl-undecaprenol N-acetylglucosamine transferase (367 aa).

UDP-N-acetyl-alpha-D-glucosamine-binding positions include 18-20 (TGG), asparagine 130, arginine 170, serine 196, isoleucine 252, 271-276 (ALTVSE), and glutamine 297.

It belongs to the glycosyltransferase 28 family. MurG subfamily.

The protein localises to the cell inner membrane. It catalyses the reaction di-trans,octa-cis-undecaprenyl diphospho-N-acetyl-alpha-D-muramoyl-L-alanyl-D-glutamyl-meso-2,6-diaminopimeloyl-D-alanyl-D-alanine + UDP-N-acetyl-alpha-D-glucosamine = di-trans,octa-cis-undecaprenyl diphospho-[N-acetyl-alpha-D-glucosaminyl-(1-&gt;4)]-N-acetyl-alpha-D-muramoyl-L-alanyl-D-glutamyl-meso-2,6-diaminopimeloyl-D-alanyl-D-alanine + UDP + H(+). It participates in cell wall biogenesis; peptidoglycan biosynthesis. Its function is as follows. Cell wall formation. Catalyzes the transfer of a GlcNAc subunit on undecaprenyl-pyrophosphoryl-MurNAc-pentapeptide (lipid intermediate I) to form undecaprenyl-pyrophosphoryl-MurNAc-(pentapeptide)GlcNAc (lipid intermediate II). This chain is UDP-N-acetylglucosamine--N-acetylmuramyl-(pentapeptide) pyrophosphoryl-undecaprenol N-acetylglucosamine transferase, found in Shewanella frigidimarina (strain NCIMB 400).